The primary structure comprises 184 residues: Endoribonuclease YbeY (184 aa).

Zn(2+) is bound by residues His-151, His-155, and His-161.

The protein belongs to the endoribonuclease YbeY family. Zn(2+) serves as cofactor.

The protein resides in the cytoplasm. Single strand-specific metallo-endoribonuclease involved in late-stage 70S ribosome quality control and in maturation of the 3' terminus of the 16S rRNA. The sequence is that of Endoribonuclease YbeY from Prochlorococcus marinus (strain NATL2A).